The sequence spans 90 residues: Accessory gland-specific peptide 26Ab (90 aa).

A signal peptide spans 1-21 (MNYFAVLCIFSCICLWQFSDA).

In terms of tissue distribution, main cells of the accessory glands of males.

It localises to the secreted. The protein resides in the extracellular space. In terms of biological role, this protein is transferred from male to female during mating and may affect egglaying and behavior after mating. This chain is Accessory gland-specific peptide 26Ab (Acp26Ab), found in Drosophila sechellia (Fruit fly).